The sequence spans 281 residues: Cytochrome c oxidase subunit 3 (281 aa).

Residues 1-15 (MTHQTHAYHMVNPSP) are Mitochondrial matrix-facing. The helical transmembrane segment at 16 to 34 (WPLTGALSALLLTSGLIMW) threads the bilayer. At 35–40 (FHYNSS) the chain is on the mitochondrial intermembrane side. Residues 41 to 66 (TLMFMGLTTMLLTMYQWWRDIIREGT) form a helical membrane-spanning segment. Residues 67-72 (FQGHHT) are Mitochondrial matrix-facing. The chain crosses the membrane as a helical span at residues 73–105 (PVVQKGLRYGMILFILSEVFFFIGFFWAFYHSS). At 106-128 (LAPTPELGGCWPPTGIHPLNPLE) the chain is on the mitochondrial intermembrane side. Residues 129–152 (VPLLNTSILLASGVSITWAHHSLM) traverse the membrane as a helical segment. Over 153 to 155 (EGN) the chain is Mitochondrial matrix. A helical membrane pass occupies residues 156 to 183 (RKQMIQALLITISLGLYFTILQAMEYYE). Over 184 to 190 (ASFTISD) the chain is Mitochondrial intermembrane. A helical transmembrane segment spans residues 191-223 (GVYGSTFFVATGFHGLHVIIGSTFLIVCLLRQL). Residues 224–232 (FYHFTSTHH) are Mitochondrial matrix-facing. Residues 233 to 256 (FGFEAAAWYWHFVDVVWLFLYVSI) form a helical membrane-spanning segment. Residues 257–281 (YWWGSYFSSMISTTDFQSLSSGSNQ) are Mitochondrial intermembrane-facing.

Belongs to the cytochrome c oxidase subunit 3 family. Component of the cytochrome c oxidase (complex IV, CIV), a multisubunit enzyme composed of 14 subunits. The complex is composed of a catalytic core of 3 subunits MT-CO1, MT-CO2 and MT-CO3, encoded in the mitochondrial DNA, and 11 supernumerary subunits COX4I, COX5A, COX5B, COX6A, COX6B, COX6C, COX7A, COX7B, COX7C, COX8 and NDUFA4, which are encoded in the nuclear genome. The complex exists as a monomer or a dimer and forms supercomplexes (SCs) in the inner mitochondrial membrane with NADH-ubiquinone oxidoreductase (complex I, CI) and ubiquinol-cytochrome c oxidoreductase (cytochrome b-c1 complex, complex III, CIII), resulting in different assemblies (supercomplex SCI(1)III(2)IV(1) and megacomplex MCI(2)III(2)IV(2)).

The protein localises to the mitochondrion inner membrane. It carries out the reaction 4 Fe(II)-[cytochrome c] + O2 + 8 H(+)(in) = 4 Fe(III)-[cytochrome c] + 2 H2O + 4 H(+)(out). Functionally, component of the cytochrome c oxidase, the last enzyme in the mitochondrial electron transport chain which drives oxidative phosphorylation. The respiratory chain contains 3 multisubunit complexes succinate dehydrogenase (complex II, CII), ubiquinol-cytochrome c oxidoreductase (cytochrome b-c1 complex, complex III, CIII) and cytochrome c oxidase (complex IV, CIV), that cooperate to transfer electrons derived from NADH and succinate to molecular oxygen, creating an electrochemical gradient over the inner membrane that drives transmembrane transport and the ATP synthase. Cytochrome c oxidase is the component of the respiratory chain that catalyzes the reduction of oxygen to water. Electrons originating from reduced cytochrome c in the intermembrane space (IMS) are transferred via the dinuclear copper A center (CU(A)) of subunit 2 and heme A of subunit 1 to the active site in subunit 1, a binuclear center (BNC) formed by heme A3 and copper B (CU(B)). The BNC reduces molecular oxygen to 2 water molecules using 4 electrons from cytochrome c in the IMS and 4 protons from the mitochondrial matrix. This chain is Cytochrome c oxidase subunit 3 (MT-CO3), found in Didelphis virginiana (North American opossum).